We begin with the raw amino-acid sequence, 443 residues long: MTKILTSSQAEELHKSIIAYLSSINASRSCEVLREELQVDSSFDDALCRKYEGLLEKKWTGIARLQKKILDLESKLAGLQTELDTISPTARSTGKDPINWLPTSSRHTFESHRDAVTCVAFHPVFTSLASGSEDCTIKIWDWELGELERTLKGHMRPVSDLDFGGQKGHTILASCSSDLQIKLWDPNKDYANVRTLSGHDHSVSAVRFLRQTDNILISASRDATIRIWDVSTGYCVKVIDSQGSWINDVSPSFDGKWLVTGGRDQAAMVWEVASAKSVASLIGHENFIECCVFAPPSSYKHLAAIAGLKTAPPASSSSEFIATGARDKTIKLWESRGRLIKTLVGHDNWVRGLLFHPGGKYLISVADDKTIRCWDLSQGGRLVKTINAHGHFVSCIRWGPVPVSDVPVETSESTKSSKSDSVKPGFQCVIATGSADSSVRIFT.

Residues 9-41 (QAEELHKSIIAYLSSINASRSCEVLREELQVDS) enclose the LisH domain. The stretch at 60-87 (TGIARLQKKILDLESKLAGLQTELDTIS) forms a coiled coil. WD repeat units follow at residues 111 to 152 (SHRD…RTLK), 154 to 194 (HMRP…ANVR), 198 to 238 (GHDH…CVKV), 241 to 280 (SQGSWINDVSPSFDGKWLVTGGRDQAAMVWEVASAKSVAS), 283 to 343 (GHEN…IKTL), 345 to 384 (GHDNWVRGLLFHPGGKYLISVADDKTIRCWDLSQGGRLVK), 388 to 427 (AHGHFVSCIRWGPVPVSDVPVETSESTKSSKSDSVKPGFQ), and 429 to 443 (VIATGSADSSVRIFT).

It belongs to the WD repeat LIS1/nudF family. Self-associates. Interacts with nudE and dynein.

Its subcellular location is the cytoplasm. The protein resides in the cytoskeleton. The protein localises to the spindle pole. Its function is as follows. Positively regulates the activity of the minus-end directed microtubule motor protein dynein. May enhance dynein-mediated microtubule sliding by targeting dynein to the microtubule plus end. Required for nuclear migration during vegetative growth as well as development. Required for retrograde early endosome (EE) transport from the hyphal tip. Required for localization of dynein to the mitotic spindle poles. Recruits additional proteins to the dynein complex at SPBs. In Aspergillus niger (strain ATCC MYA-4892 / CBS 513.88 / FGSC A1513), this protein is Nuclear distribution protein nudF.